A 305-amino-acid polypeptide reads, in one-letter code: MSVYTSVSDDEMRGFLSGYDLGEFVSLQGIAQGITNSNYFLTTTSGRYVLTVFEVLKQEELPFFLELNRHLSMKGVAVAAPVARKDGRLDSVLAGKPACLVACLKGSDTALPTAEQCFHTGAMLAKMHLAAADFPLEMENPRYNAWWTEACARLLPVLSQDDAALLCSEIDALKDNLGNHLPSGIIHADLFKDNVLLDGGQVSGFIDFYYACRGNFMYDLAIAVNDWARTADNKLDEALKKAFIGGYEGVRPLSAEEKAYFPTAQRAGCIRFWVSRLLDFHFPQAGEMTFIKDPNAFRNLLLSLG.

The protein belongs to the pseudomonas-type ThrB family.

The catalysed reaction is L-homoserine + ATP = O-phospho-L-homoserine + ADP + H(+). It functions in the pathway amino-acid biosynthesis; L-threonine biosynthesis; L-threonine from L-aspartate: step 4/5. This Neisseria meningitidis serogroup B (strain ATCC BAA-335 / MC58) protein is Homoserine kinase.